Here is a 47-residue protein sequence, read N- to C-terminus: Putative beta-neurotoxin (47 aa).

In terms of domain architecture, LCN-type CS-alpha/beta spans 1–47 (KEGYMGSDGCKMSCVINDQFCDTECQAKLKGSTGYCYFXGLACYXXG). Cystine bridges form between cysteine 14–cysteine 36 and cysteine 21–cysteine 43.

Expressed by the venom gland.

Its subcellular location is the secreted. In terms of biological role, causes transient paralysis of the rear legs of and spasms in insects (A.domestica). The chain is Putative beta-neurotoxin from Rhopalurus junceus (Caribbean blue scorpion).